The primary structure comprises 388 residues: Outer membrane protein assembly factor BamB (388 aa).

A signal peptide spans 1-17; sequence MVLSLLSVMLLSGYKFL.

Belongs to the BamB family. In terms of assembly, part of the Bam complex, which is composed of the outer membrane protein BamA, and four lipoproteins BamB, BamC, BamD and BamE.

It localises to the cell outer membrane. Its function is as follows. Part of the outer membrane protein assembly complex, which is involved in assembly and insertion of beta-barrel proteins into the outer membrane. The polypeptide is Outer membrane protein assembly factor BamB (Moranella endobia (strain PCIT)).